Reading from the N-terminus, the 597-residue chain is TOX high mobility group box family member 4 (597 aa).

Disordered stretches follow at residues 160–224 (GAIL…EPQK) and 520–546 (VQEE…SPQP). A compositionally biased stretch (basic residues) spans 207–217 (KPKTPKKKKKK). Positions 212–217 (KKKKKK) match the Nuclear localization signal motif. Residues 222–290 (PQKPLSAYAL…EYLKALALYK (69 aa)) constitute a DNA-binding region (HMG box).

In terms of assembly, component of the PNUTS-PP1 phosphatase complex.

The protein localises to the nucleus. The protein resides in the chromosome. Transcription factor that modulates cell fate reprogramming from the somatic state to the pluripotent and neuronal fate. Also acts as a regulatory component of protein phosphatase 1 (PP1) complexes. Component of the PNUTS-PP1 protein phosphatase complex, a PP1 complex that regulates RNA polymerase II transcription pause-release. PNUTS-PP1 also plays a role in the control of chromatin structure and cell cycle progression during the transition from mitosis into interphase. This is TOX high mobility group box family member 4 (tox4) from Xenopus tropicalis (Western clawed frog).